The chain runs to 309 residues: Methionyl-tRNA formyltransferase (309 aa).

112-115 (SLLP) contributes to the (6S)-5,6,7,8-tetrahydrofolate binding site.

Belongs to the Fmt family.

It catalyses the reaction L-methionyl-tRNA(fMet) + (6R)-10-formyltetrahydrofolate = N-formyl-L-methionyl-tRNA(fMet) + (6S)-5,6,7,8-tetrahydrofolate + H(+). Its function is as follows. Attaches a formyl group to the free amino group of methionyl-tRNA(fMet). The formyl group appears to play a dual role in the initiator identity of N-formylmethionyl-tRNA by promoting its recognition by IF2 and preventing the misappropriation of this tRNA by the elongation apparatus. The polypeptide is Methionyl-tRNA formyltransferase (Bartonella quintana (strain Toulouse) (Rochalimaea quintana)).